We begin with the raw amino-acid sequence, 325 residues long: Olfactory receptor 5T18 (325 aa).

Residues 1 to 22 lie on the Extracellular side of the membrane; that stretch reads MRNITEATFFVLKGLTDNNELQ. Asn3 carries an N-linked (GlcNAc...) asparagine glycan. The next 2 helical transmembrane spans lie at 23 to 43 and 44 to 64; these read IILF…NVGL and IILV…LSVL. The Extracellular segment spans residues 65–97; sequence SSVDACYSTDITPNMLVGFMSKSKIISFYGCAT. A disulfide bridge connects residues Cys95 and Cys187. A helical membrane pass occupies residues 98–118; sequence QMFLAVTFGTTECFLLAAMAY. Over 119-139 the chain is Cytoplasmic; sequence DRYVAIHDPLLYAVSMSPRVY. The helical transmembrane segment at 140–160 threads the bilayer; sequence IPLIIASYAGGIVHAIIHTVA. Over 161 to 194 the chain is Extracellular; that stretch reads TFSLSFCRSNEVKHIFCDIPPLLAISCSETYVNE. The chain crosses the membrane as a helical span at residues 195–215; the sequence is LLLFFFVSFIELVTILIVLVS. Residues 216–234 are Cytoplasmic-facing; it reads YAFILLSILKMNSSEGRRK. A helical transmembrane segment spans residues 235 to 255; the sequence is VFSTCGAHLTAVSIYYGTILF. Residues 256–269 lie on the Extracellular side of the membrane; sequence MYVRPSSNYSLEHD. Residues 270-290 form a helical membrane-spanning segment; the sequence is MIVSTFYTIGIPMLNPIIYSL. Topologically, residues 291-325 are cytoplasmic; it reads RNKDVKEAMKRVLRKKINIKHRIKKLNDFSVFLMP.

Belongs to the G-protein coupled receptor 1 family.

The protein resides in the cell membrane. In terms of biological role, potential odorant receptor. This chain is Olfactory receptor 5T18, found in Mus musculus (Mouse).